The chain runs to 408 residues: LL-diaminopimelate aminotransferase (408 aa).

Y15 and G42 together coordinate substrate. Pyridoxal 5'-phosphate-binding positions include Y72, 108 to 109 (SK), Y132, N187, Y218, and 246 to 248 (SFS). Substrate-binding residues include K109, Y132, and N187. Residue K249 is modified to N6-(pyridoxal phosphate)lysine. Pyridoxal 5'-phosphate contacts are provided by R257 and N292. Residues N292 and R388 each coordinate substrate.

It belongs to the class-I pyridoxal-phosphate-dependent aminotransferase family. LL-diaminopimelate aminotransferase subfamily. As to quaternary structure, homodimer. It depends on pyridoxal 5'-phosphate as a cofactor.

It carries out the reaction (2S,6S)-2,6-diaminopimelate + 2-oxoglutarate = (S)-2,3,4,5-tetrahydrodipicolinate + L-glutamate + H2O + H(+). It participates in amino-acid biosynthesis; L-lysine biosynthesis via DAP pathway; LL-2,6-diaminopimelate from (S)-tetrahydrodipicolinate (aminotransferase route): step 1/1. Involved in the synthesis of meso-diaminopimelate (m-DAP or DL-DAP), required for both lysine and peptidoglycan biosynthesis. Catalyzes the direct conversion of tetrahydrodipicolinate to LL-diaminopimelate. The polypeptide is LL-diaminopimelate aminotransferase (Prochlorococcus marinus subsp. pastoris (strain CCMP1986 / NIES-2087 / MED4)).